A 156-amino-acid polypeptide reads, in one-letter code: Ecotin (156 aa).

A signal peptide spans 1–19; it reads MKALLIAAGVAALSSTAMA. Cysteines 65 and 102 form a disulfide.

The protein belongs to the protease inhibitor I11 (ecotin) family. As to quaternary structure, homodimer.

It is found in the periplasm. In terms of biological role, general inhibitor of family S1 serine proteases. This is Ecotin from Pseudomonas aeruginosa (strain ATCC 15692 / DSM 22644 / CIP 104116 / JCM 14847 / LMG 12228 / 1C / PRS 101 / PAO1).